The primary structure comprises 422 residues: Tryptophan synthase beta chain 2 (422 aa).

K111 is subject to N6-(pyridoxal phosphate)lysine.

This sequence belongs to the TrpB family. As to quaternary structure, tetramer of two alpha and two beta chains. Pyridoxal 5'-phosphate is required as a cofactor.

The enzyme catalyses (1S,2R)-1-C-(indol-3-yl)glycerol 3-phosphate + L-serine = D-glyceraldehyde 3-phosphate + L-tryptophan + H2O. The protein operates within amino-acid biosynthesis; L-tryptophan biosynthesis; L-tryptophan from chorismate: step 5/5. The beta subunit is responsible for the synthesis of L-tryptophan from indole and L-serine. The protein is Tryptophan synthase beta chain 2 (trpB2) of Thermotoga maritima (strain ATCC 43589 / DSM 3109 / JCM 10099 / NBRC 100826 / MSB8).